The sequence spans 252 residues: Triosephosphate isomerase (252 aa).

10 to 12 (NWK) lines the substrate pocket. His96 functions as the Electrophile in the catalytic mechanism. Catalysis depends on Glu168, which acts as the Proton acceptor. Residues Gly174, Ser214, and 235–236 (GG) each bind substrate.

This sequence belongs to the triosephosphate isomerase family. As to quaternary structure, homodimer.

It is found in the cytoplasm. It catalyses the reaction D-glyceraldehyde 3-phosphate = dihydroxyacetone phosphate. It functions in the pathway carbohydrate biosynthesis; gluconeogenesis. It participates in carbohydrate degradation; glycolysis; D-glyceraldehyde 3-phosphate from glycerone phosphate: step 1/1. Involved in the gluconeogenesis. Catalyzes stereospecifically the conversion of dihydroxyacetone phosphate (DHAP) to D-glyceraldehyde-3-phosphate (G3P). The sequence is that of Triosephosphate isomerase from Streptococcus agalactiae serotype Ia (strain ATCC 27591 / A909 / CDC SS700).